The following is a 130-amino-acid chain: MTKEFNYGTGRRKTATARTRLYPGTGVIEINGRPYEEFFPRKTLQMIIRQPLVLTKMLEKFDVKVNVAGGGISGQAEAVRHGISRALLELDAELRPVLKRAGFLTRDARKKERKKYGLRAARARYQYSKR.

The protein belongs to the universal ribosomal protein uS9 family.

The polypeptide is Small ribosomal subunit protein uS9 (Nitratidesulfovibrio vulgaris (strain ATCC 29579 / DSM 644 / CCUG 34227 / NCIMB 8303 / VKM B-1760 / Hildenborough) (Desulfovibrio vulgaris)).